The following is a 206-amino-acid chain: MARYLGPKLKLSRREGTDLFLKSGFRSIDSKCKLEHPPGQHGVRKPRLSDYAIQLREKQKVRRLYGVLERQFRIYYKKASRSKGNTGENLLQLLERRLDNVVYRMGFGCTRSESRQLISHKSIKVNNNIVNIASYQISPNDRISVRDKSKNQSRIKAALELTEQREKLMWIEVNVTKMEGIFKRFPERSDLSAEINEHLIVELYSK.

The S4 RNA-binding domain occupies 96 to 156; the sequence is RRLDNVVYRM…DKSKNQSRIK (61 aa).

The protein belongs to the universal ribosomal protein uS4 family. In terms of assembly, part of the 30S ribosomal subunit. Contacts protein S5. The interaction surface between S4 and S5 is involved in control of translational fidelity.

Its function is as follows. One of the primary rRNA binding proteins, it binds directly to 16S rRNA where it nucleates assembly of the body of the 30S subunit. Functionally, with S5 and S12 plays an important role in translational accuracy. The chain is Small ribosomal subunit protein uS4 from Buchnera aphidicola subsp. Schizaphis graminum (strain Sg).